A 150-amino-acid chain; its full sequence is SsrA-binding protein (150 aa).

This sequence belongs to the SmpB family.

Its subcellular location is the cytoplasm. In terms of biological role, required for rescue of stalled ribosomes mediated by trans-translation. Binds to transfer-messenger RNA (tmRNA), required for stable association of tmRNA with ribosomes. tmRNA and SmpB together mimic tRNA shape, replacing the anticodon stem-loop with SmpB. tmRNA is encoded by the ssrA gene; the 2 termini fold to resemble tRNA(Ala) and it encodes a 'tag peptide', a short internal open reading frame. During trans-translation Ala-aminoacylated tmRNA acts like a tRNA, entering the A-site of stalled ribosomes, displacing the stalled mRNA. The ribosome then switches to translate the ORF on the tmRNA; the nascent peptide is terminated with the 'tag peptide' encoded by the tmRNA and targeted for degradation. The ribosome is freed to recommence translation, which seems to be the essential function of trans-translation. This chain is SsrA-binding protein, found in Flavobacterium psychrophilum (strain ATCC 49511 / DSM 21280 / CIP 103535 / JIP02/86).